We begin with the raw amino-acid sequence, 4388 residues long: Intermembrane lipid transfer protein VPS13D (4388 aa).

The 114-residue stretch at 2-115 (LEGLVAWVLN…ERERKKALLQ (114 aa)) folds into the Chorein N-terminal domain. Serine 663 is modified (phosphoserine). The interval 745 to 796 (QDNSRRKSRDGSASEETQFSDDEYKTPLATPPNTPPPESSSSNGEKTPPFSG) is disordered. Over residues 747 to 756 (NSRRKSRDGS) the composition is skewed to basic and acidic residues. Over residues 773–782 (ATPPNTPPPE) the composition is skewed to pro residues. 5 positions are modified to phosphoserine: serine 1034, serine 1038, serine 1042, serine 1138, and serine 1341. Positions 1563–1582 (ASATSSPCPDSPLPPLSTCG) are disordered. 3 positions are modified to phosphoserine: serine 1598, serine 1603, and serine 1699. Disordered regions lie at residues 1741 to 1771 (RPTSASRKKQKEVQDKDYPLTPPPSPTVDEP), 2070 to 2108 (QDKESVPSASPTGIPKHSLRKTTSTEEPRGTHSQGQFTM), and 2122 to 2145 (FVPSTSTKQQGPQPTLSVGQESSS). Threonine 1761 carries the post-translational modification Phosphothreonine. The residue at position 1765 (serine 1765) is a Phosphoserine. Over residues 2123 to 2144 (VPSTSTKQQGPQPTLSVGQESS) the composition is skewed to polar residues. Phosphoserine is present on residues serine 2435, serine 2671, serine 2861, serine 2864, and serine 2983. The 44-residue stretch at 2633–2676 (TLDPVLELQLARLQELGFSMDDCRKALLACQGQLKKAASWLFKN) folds into the UBA domain. The SHR-BD domain maps to 3276-3558 (LKIFISAPYW…LDYAWDEPTL (283 aa)). Lysine 3524 carries the N6-acetyllysine modification.

This sequence belongs to the VPS13 family. In terms of tissue distribution, widely expressed.

Mediates the transfer of lipids between membranes at organelle contact sites. Functions in promoting mitochondrial clearance by mitochondrial autophagy (mitophagy), also possibly by positively regulating mitochondrial fission. Mitophagy plays an important role in regulating cell health and mitochondrial size and homeostasis. This chain is Intermembrane lipid transfer protein VPS13D, found in Homo sapiens (Human).